Here is a 151-residue protein sequence, read N- to C-terminus: UPF0178 protein CJA_1978 (151 aa).

It belongs to the UPF0178 family.

The protein is UPF0178 protein CJA_1978 of Cellvibrio japonicus (strain Ueda107) (Pseudomonas fluorescens subsp. cellulosa).